A 583-amino-acid chain; its full sequence is Propane 2-monooxygenase operon transcriptional activator MimR (583 aa).

A Sigma-54 factor interaction domain is found at 320-513 (LAGRSSSFRR…LRHVLTETLR (194 aa)). Residues 348 to 355 (GEKGSGRT) and 395 to 404 (DADFAVIVAD) each bind ATP.

Acts as a transcriptional activator of the mimABCD operon encoding the propane 2-monooxygenase complex. This is Propane 2-monooxygenase operon transcriptional activator MimR from Mycolicibacterium goodii (Mycobacterium goodii).